Here is a 370-residue protein sequence, read N- to C-terminus: Glutamate 5-kinase (370 aa).

K17 contributes to the ATP binding site. S56, D143, and N155 together coordinate substrate. S175–D176 is a binding site for ATP. Positions R280–S357 constitute a PUA domain.

It belongs to the glutamate 5-kinase family.

It is found in the cytoplasm. It catalyses the reaction L-glutamate + ATP = L-glutamyl 5-phosphate + ADP. The protein operates within amino-acid biosynthesis; L-proline biosynthesis; L-glutamate 5-semialdehyde from L-glutamate: step 1/2. Its function is as follows. Catalyzes the transfer of a phosphate group to glutamate to form L-glutamate 5-phosphate. The polypeptide is Glutamate 5-kinase (Cereibacter sphaeroides (strain ATCC 17023 / DSM 158 / JCM 6121 / CCUG 31486 / LMG 2827 / NBRC 12203 / NCIMB 8253 / ATH 2.4.1.) (Rhodobacter sphaeroides)).